The primary structure comprises 239 residues: Tetraspanin-9 (239 aa).

Residues 1 to 13 (MARGCLCCLKYTM) lie on the Cytoplasmic side of the membrane. Residues 14 to 34 (FLFNLIFWLCGCGLLGVGIWL) traverse the membrane as a helical segment. Topologically, residues 35 to 55 (SVSQGNFATFSPSFPSLSAAN) are extracellular. A helical transmembrane segment spans residues 56 to 76 (LVIAIGTIVMVTGFLGCLGAI). Over 77–85 (KENKCLLLS) the chain is Cytoplasmic. The helical transmembrane segment at 86–106 (FFIVLLIILLAELILIILFFV) threads the bilayer. The Extracellular portion of the chain corresponds to 107–203 (YMDKVNENAK…VKLWFDDNKH (97 aa)). The N-linked (GlcNAc...) asparagine glycan is linked to N180. The helical transmembrane segment at 204 to 224 (VLGTVGMCILIMQILGMAFSM) threads the bilayer. The Cytoplasmic portion of the chain corresponds to 225 to 239 (TLFQHIHRTGKKYDA).

It belongs to the tetraspanin (TM4SF) family. As to quaternary structure, found in a complex with GP6. Glycosylated. In terms of tissue distribution, strongly expressed in megakaryocytes, platelets and lung. Weakly expressed in bone marrow, brain and kidney (at protein level).

The protein localises to the membrane. This chain is Tetraspanin-9 (Tspan9), found in Mus musculus (Mouse).